A 623-amino-acid polypeptide reads, in one-letter code: Kelch repeat and BTB domain-containing protein 2 (623 aa).

The region spanning 31–98 (TDIVLIVEGT…AYTGNLAMND (68 aa)) is the BTB domain. A BACK domain is found at 133–229 (CVRLLSFADL…IRIDALSEVT (97 aa)). The residue at position 300 (S300) is a Phosphoserine. 5 Kelch repeats span residues 317 to 380 (DIYI…CCEG), 381 to 429 (YIYA…VVHD), 431 to 469 (IYVMTLNLMYCYFPRSDSWVEMAMRQTSRSFASAAAFGD), 470 to 529 (KIFY…RAVV), and 535 to 581 (CVFM…DFRC).

In terms of assembly, component of the BCR(KBTBD2) E3 ubiquitin ligase complex, at least composed of CUL3, KBTBD2 and RBX1. Interacts (via the BTB domain) with CUL3.

The protein operates within protein modification; protein ubiquitination. Substrate-specific adapter of a BCR (BTB-CUL3-RBX1) E3 ubiquitin ligase complex that acts as a regulator of the insulin signaling pathway, modulating insulin sensitivity by limiting PIK3R1/p85alpha abundance in adipocytes. Targets PIK3R1, the regulatory subunit of phosphatidylinositol 3-kinase (PI3K), for 'Lys-48'-linked polyubiquitination and proteasome-mediated degradation. The protein is Kelch repeat and BTB domain-containing protein 2 of Homo sapiens (Human).